The primary structure comprises 196 residues: Thymidine kinase (196 aa).

ATP contacts are provided by residues 9–16 and 87–90; these read SAMNAGKS and DECQ. Glu88 (proton acceptor) is an active-site residue. The Zn(2+) site is built by Cys145, Cys147, Cys182, and His185.

The protein belongs to the thymidine kinase family. As to quaternary structure, homotetramer.

It localises to the cytoplasm. It catalyses the reaction thymidine + ATP = dTMP + ADP + H(+). The protein is Thymidine kinase of Yersinia pestis.